The chain runs to 65 residues: uncharacterized protein (65 aa).

A disordered region spans residues 1–22 (MEKETPQQETKQSTNKESGFFD). The segment covering 7–17 (QQETKQSTNKE) has biased composition (polar residues). Positions 22–65 (DEIIKRTNQLLEKEKELHEKYNKEITSQQDQIDQLKKKINQLKY) form a coiled coil.

This is an uncharacterized protein from Dictyostelium discoideum (Social amoeba).